The sequence spans 105 residues: Heat shock protein HspQ (105 aa).

The disordered stretch occupies residues 80–105 (AHPEQPSLDELAASIRHQLQAPHLRN).

This sequence belongs to the HspQ family.

Its subcellular location is the cytoplasm. Involved in the degradation of certain denaturated proteins, including DnaA, during heat shock stress. In Yersinia pseudotuberculosis serotype O:1b (strain IP 31758), this protein is Heat shock protein HspQ.